The sequence spans 711 residues: Arginine decarboxylase 2 (711 aa).

Position 147 is an N6-(pyridoxal phosphate)lysine (Lys-147). 331–341 contributes to the substrate binding site; it reads IDIGGGLGIDY. The tract at residues 642-661 is disordered; it reads MHTKGGSEGENEEEEEDDEF. The segment covering 650 to 661 has biased composition (acidic residues); that stretch reads GENEEEEEDDEF.

This sequence belongs to the Orn/Lys/Arg decarboxylase class-II family. SpeA subfamily. Homodimer and heterodimer with ADC1. The cofactor is pyridoxal 5'-phosphate. Mg(2+) is required as a cofactor.

It is found in the plastid. The protein resides in the chloroplast. It localises to the cytoplasm. Its subcellular location is the cytosol. The enzyme catalyses L-arginine + H(+) = agmatine + CO2. Its pathway is amine and polyamine biosynthesis; agmatine biosynthesis; agmatine from L-arginine: step 1/1. Its function is as follows. Required for the biosynthesis of putrescine. Catalyzes the first step of polyamine (PA) biosynthesis to produce putrescine from arginine. Is a major contributor to basal arginine decarboxylase (ADC) activity and putrescine biosynthesis. Accumulation of putrescine plays a positive role in salt stress tolerance. Accumulation of putrescine plays a positive role in freezing tolerance. Production of PA is essential for normal seed development. Controls PA homeostasis which is crucial for normal plant growth and development. The protein is Arginine decarboxylase 2 of Arabidopsis thaliana (Mouse-ear cress).